The primary structure comprises 742 residues: Clamp-binding protein CrfC (742 aa).

A clamp-binding consensus region spans residues 41-45; it reads QLALP. The Dynamin-type G domain maps to 66–402; that stretch reads SRLEMVLAIV…LWEDSLFAQP (337 aa). The interval 76–83 is G1 motif; it reads GTMKAGKS. The segment at 102 to 104 is G2 motif; it reads MTA. The tract at residues 236–239 is G3 motif; it reads DTPG. The G4 motif stretch occupies residues 297–300; that stretch reads NKFD. Positions 331 to 334 are G5 motif; the sequence is FPVS. Residues 440-472 adopt a coiled-coil conformation; the sequence is RAHGLNVACEQLRQNIHQIEESLQLLQLNQAQV.

The protein belongs to the TRAFAC class dynamin-like GTPase superfamily. Dynamin/Fzo/YdjA family. In terms of assembly, forms homooligomers. Binds to the beta sliding clamp processivity factor (DnaN) in the presence and absence of DNA, may bind to the clamp itself as homodimers or trimers. Homooligomers may be able to bind more than 1 clamp complex.

The protein resides in the cytoplasm. Functionally, important for the colocalization of sister nascent DNA strands after replication fork passage during DNA replication, and for positioning and subsequent partitioning of sister chromosomes. Does not have GTPase activity on its own. In Escherichia coli (strain K12), this protein is Clamp-binding protein CrfC (crfC).